The following is a 311-amino-acid chain: Solute carrier family 25 member 48 (311 aa).

Solcar repeat units follow at residues 3 to 86, 101 to 205, and 214 to 301; these read SFQL…TQRF, RTLS…LSEW, and PSPC…SLQA. 6 helical membrane-spanning segments follow: residues 9–29, 61–81, 107–127, 189–209, 217–237, and 277–295; these read FAAGWIGGAASVIVGHPLDTV, GMSFPLASIAVYNSVVFGVFS, LLASMVAGVVSVGLGGPVDLI, VPGYCLYFIPYVFLSEWITPE, CAVWLAGGMAGAISWGTATPM, and ITVNAVRGFPMSAAMFLGY.

The protein belongs to the mitochondrial carrier (TC 2.A.29) family.

Its subcellular location is the mitochondrion inner membrane. The polypeptide is Solute carrier family 25 member 48 (SLC25A48) (Homo sapiens (Human)).